The sequence spans 131 residues: Large ribosomal subunit protein bL17 (131 aa).

Belongs to the bacterial ribosomal protein bL17 family. As to quaternary structure, part of the 50S ribosomal subunit. Contacts protein L32.

The polypeptide is Large ribosomal subunit protein bL17 (Sodalis glossinidius (strain morsitans)).